The primary structure comprises 302 residues: Sulfotransferase 1C4 (302 aa).

Residue 55–60 (KAGTTW) participates in 3'-phosphoadenylyl sulfate binding. Residue 113-115 (KTH) coordinates substrate. His-115 (proton acceptor) is an active-site residue. 3'-phosphoadenylyl sulfate contacts are provided by residues Arg-137, Ser-145, Tyr-200, 234–239 (TSFDVM), and 262–266 (FMRKG).

Belongs to the sulfotransferase 1 family. In terms of tissue distribution, expressed at high levels in fetal lung and kidney and at low levels in fetal heart, adult kidney, ovary and spinal cord.

It localises to the cytoplasm. The protein resides in the cytosol. The enzyme catalyses a phenol + 3'-phosphoadenylyl sulfate = an aryl sulfate + adenosine 3',5'-bisphosphate + H(+). It carries out the reaction 17beta-estradiol + 3'-phosphoadenylyl sulfate = 17beta-estradiol 3-sulfate + adenosine 3',5'-bisphosphate + H(+). The catalysed reaction is bisphenol A + 3'-phosphoadenylyl sulfate = bisphenyl A sulfate + adenosine 3',5'-bisphosphate + H(+). Functionally, sulfotransferase that utilizes 3'-phospho-5'-adenylyl sulfate (PAPS) as sulfonate donor to catalyze the sulfate conjugation of phenolic compounds. Can also sulfonate estrogenic compounds, however, the dietary flavonoids (phytoestrogen) and environmental estrogens, like bisphenol A are better substrates than 17beta-estradiol (E2). Mediates the sulfation of doxorubicin and its analog epirubicin, two antitumor anthracyclines. This chain is Sulfotransferase 1C4, found in Homo sapiens (Human).